The chain runs to 264 residues: Thymidylate synthase (264 aa).

Arg-21 serves as a coordination point for dUMP. His-51 serves as a coordination point for (6R)-5,10-methylene-5,6,7,8-tetrahydrofolate. A dUMP-binding site is contributed by 126–127 (RR). Cys-146 (nucleophile) is an active-site residue. DUMP-binding positions include 166–169 (RSAD), Asn-177, and 207–209 (HLY). A (6R)-5,10-methylene-5,6,7,8-tetrahydrofolate-binding site is contributed by Asp-169. Ala-263 contributes to the (6R)-5,10-methylene-5,6,7,8-tetrahydrofolate binding site.

The protein belongs to the thymidylate synthase family. Bacterial-type ThyA subfamily. As to quaternary structure, homodimer.

The protein resides in the cytoplasm. The catalysed reaction is dUMP + (6R)-5,10-methylene-5,6,7,8-tetrahydrofolate = 7,8-dihydrofolate + dTMP. It functions in the pathway pyrimidine metabolism; dTTP biosynthesis. Catalyzes the reductive methylation of 2'-deoxyuridine-5'-monophosphate (dUMP) to 2'-deoxythymidine-5'-monophosphate (dTMP) while utilizing 5,10-methylenetetrahydrofolate (mTHF) as the methyl donor and reductant in the reaction, yielding dihydrofolate (DHF) as a by-product. This enzymatic reaction provides an intracellular de novo source of dTMP, an essential precursor for DNA biosynthesis. This chain is Thymidylate synthase, found in Thiobacillus denitrificans (strain ATCC 25259 / T1).